Here is a 340-residue protein sequence, read N- to C-terminus: Ketol-acid reductoisomerase (NADP(+)) (340 aa).

One can recognise a KARI N-terminal Rossmann domain in the interval 1–183 (MAITVYYDKD…GGGRTGIIET (183 aa)). Residues 26-29 (FGSQ), R49, S52, S54, and 84-87 (DEIQ) each bind NADP(+). The active site involves H109. Position 135 (G135) interacts with NADP(+). The region spanning 184 to 329 (TFKAETETDL…RNLRAMMPWI (146 aa)) is the KARI C-terminal knotted domain. Residues D192, E196, E228, and E232 each coordinate Mg(2+). Residue S253 coordinates substrate.

Belongs to the ketol-acid reductoisomerase family. Mg(2+) is required as a cofactor.

The enzyme catalyses (2R)-2,3-dihydroxy-3-methylbutanoate + NADP(+) = (2S)-2-acetolactate + NADPH + H(+). It carries out the reaction (2R,3R)-2,3-dihydroxy-3-methylpentanoate + NADP(+) = (S)-2-ethyl-2-hydroxy-3-oxobutanoate + NADPH + H(+). It functions in the pathway amino-acid biosynthesis; L-isoleucine biosynthesis; L-isoleucine from 2-oxobutanoate: step 2/4. The protein operates within amino-acid biosynthesis; L-valine biosynthesis; L-valine from pyruvate: step 2/4. Involved in the biosynthesis of branched-chain amino acids (BCAA). Catalyzes an alkyl-migration followed by a ketol-acid reduction of (S)-2-acetolactate (S2AL) to yield (R)-2,3-dihydroxy-isovalerate. In the isomerase reaction, S2AL is rearranged via a Mg-dependent methyl migration to produce 3-hydroxy-3-methyl-2-ketobutyrate (HMKB). In the reductase reaction, this 2-ketoacid undergoes a metal-dependent reduction by NADPH to yield (R)-2,3-dihydroxy-isovalerate. The sequence is that of Ketol-acid reductoisomerase (NADP(+)) from Campylobacter jejuni subsp. jejuni serotype O:2 (strain ATCC 700819 / NCTC 11168).